The chain runs to 198 residues: Nucleoside triphosphate pyrophosphatase (198 aa).

Aspartate 70 acts as the Proton acceptor in catalysis.

This sequence belongs to the Maf family. The cofactor is a divalent metal cation.

It localises to the cytoplasm. The catalysed reaction is a ribonucleoside 5'-triphosphate + H2O = a ribonucleoside 5'-phosphate + diphosphate + H(+). The enzyme catalyses a 2'-deoxyribonucleoside 5'-triphosphate + H2O = a 2'-deoxyribonucleoside 5'-phosphate + diphosphate + H(+). In terms of biological role, nucleoside triphosphate pyrophosphatase. May have a dual role in cell division arrest and in preventing the incorporation of modified nucleotides into cellular nucleic acids. This Thermosynechococcus vestitus (strain NIES-2133 / IAM M-273 / BP-1) protein is Nucleoside triphosphate pyrophosphatase.